Reading from the N-terminus, the 148-residue chain is Large ribosomal subunit protein uL15 (148 aa).

The segment covering Met1 to Gly30 has biased composition (basic residues). Residues Met1–Leu38 are disordered. Residue His39 is modified to (3S)-3-hydroxyhistidine. An N6-acetyllysine mark is found at Lys47 and Lys55. Position 68 is a phosphoserine (Ser68). Lys110 bears the N6-acetyllysine mark.

This sequence belongs to the universal ribosomal protein uL15 family. Component of the large ribosomal subunit. In terms of processing, hydroxylated on His-39 by MINA.

It localises to the cytoplasm. Its function is as follows. Component of the large ribosomal subunit. The ribosome is a large ribonucleoprotein complex responsible for the synthesis of proteins in the cell. The protein is Large ribosomal subunit protein uL15 (RPL27A) of Homo sapiens (Human).